The primary structure comprises 327 residues: o-succinylbenzoate synthase (327 aa).

Lysine 110 serves as the catalytic Proton donor. Aspartate 138, glutamate 165, and aspartate 188 together coordinate Mg(2+). Lysine 212 serves as the catalytic Proton acceptor.

Belongs to the mandelate racemase/muconate lactonizing enzyme family. MenC type 1 subfamily. It depends on a divalent metal cation as a cofactor.

The enzyme catalyses (1R,6R)-6-hydroxy-2-succinyl-cyclohexa-2,4-diene-1-carboxylate = 2-succinylbenzoate + H2O. It participates in quinol/quinone metabolism; 1,4-dihydroxy-2-naphthoate biosynthesis; 1,4-dihydroxy-2-naphthoate from chorismate: step 4/7. It functions in the pathway quinol/quinone metabolism; menaquinone biosynthesis. Converts 2-succinyl-6-hydroxy-2,4-cyclohexadiene-1-carboxylate (SHCHC) to 2-succinylbenzoate (OSB). This chain is o-succinylbenzoate synthase, found in Mycobacterium ulcerans (strain Agy99).